We begin with the raw amino-acid sequence, 68 residues long: MDQVMQFVEPSRQFVKDSIRLVKRCTKPDRKEFQKIAMATAIGFAIMGFIGFFVKLIHIPINNIIVGS.

The Cytoplasmic portion of the chain corresponds to 1–32; the sequence is MDQVMQFVEPSRQFVKDSIRLVKRCTKPDRKE. A helical membrane pass occupies residues 33-61; that stretch reads FQKIAMATAIGFAIMGFIGFFVKLIHIPI. The Extracellular segment spans residues 62–68; the sequence is NNIIVGS.

Belongs to the SecE/SEC61-gamma family. As to quaternary structure, the SEC61 channel-forming translocon complex consists of channel-forming core components SEC61A1, SEC61B and SEC61G and different auxiliary components such as SEC62 and SEC63. The SEC61 channel associates with the multi-pass translocon (MPT) complex.

The protein resides in the endoplasmic reticulum membrane. Its function is as follows. Component of SEC61 channel-forming translocon complex that mediates transport of signal peptide-containing precursor polypeptides across the endoplasmic reticulum (ER). Forms a ribosome receptor and a gated pore in the ER membrane, both functions required for cotranslational translocation of nascent polypeptides. The SEC61 channel is also involved in ER membrane insertion of transmembrane proteins: it mediates membrane insertion of the first few transmembrane segments of proteins, while insertion of subsequent transmembrane regions of multi-pass membrane proteins is mediated by the multi-pass translocon (MPT) complex. This is Protein transport protein Sec61 subunit gamma (sec61g) from Xenopus laevis (African clawed frog).